Here is a 426-residue protein sequence, read N- to C-terminus: Adenylosuccinate synthetase (426 aa).

GTP is bound by residues 12 to 18 (GDEGKGK) and 40 to 42 (GHT). The Proton acceptor role is filled by Asp-13. Mg(2+) contacts are provided by Asp-13 and Gly-40. Residues 13–16 (DEGK), 38–41 (NAGH), Thr-128, Arg-142, Gln-223, Thr-238, and Arg-302 contribute to the IMP site. The active-site Proton donor is His-41. Residue 298–304 (TTTGRAR) coordinates substrate. GTP is bound by residues Arg-304, 330 to 332 (KLD), and 412 to 414 (SVG).

The protein belongs to the adenylosuccinate synthetase family. Homodimer. Mg(2+) serves as cofactor.

The protein localises to the cytoplasm. The catalysed reaction is IMP + L-aspartate + GTP = N(6)-(1,2-dicarboxyethyl)-AMP + GDP + phosphate + 2 H(+). Its pathway is purine metabolism; AMP biosynthesis via de novo pathway; AMP from IMP: step 1/2. Functionally, plays an important role in the de novo pathway of purine nucleotide biosynthesis. Catalyzes the first committed step in the biosynthesis of AMP from IMP. The sequence is that of Adenylosuccinate synthetase from Thermoanaerobacter pseudethanolicus (strain ATCC 33223 / 39E) (Clostridium thermohydrosulfuricum).